Reading from the N-terminus, the 264-residue chain is 4-oxalocrotonate decarboxylase (264 aa).

The protein belongs to the hydratase/decarboxylase family.

It catalyses the reaction (3E)-2-oxohex-3-enedioate + H(+) = 2-oxopent-4-enoate + CO2. It functions in the pathway xenobiotic degradation; toluene degradation. This chain is 4-oxalocrotonate decarboxylase (xylI), found in Pseudomonas putida (Arthrobacter siderocapsulatus).